A 127-amino-acid polypeptide reads, in one-letter code: Protein YwpG (127 aa).

As to quaternary structure, interacts with both the D1 and D2 domains of dynamin-like protein DynA.

The protein localises to the cell membrane. In Bacillus subtilis (strain 168), this protein is Protein YwpG (ywpG).